Reading from the N-terminus, the 369-residue chain is MARTTDDSKKAAPAAGTADEAQKQKALKMVLTQIKRNFGEGAIMRLGENTRIRVETVPSGAITLDLALGGGLPRGRVIEIYGPESSGKTTLALHAIAEIQKTGGVAAFVDAEHALDPAYAKVLGVNVDDLIISQPDTGEMAMEIVDQLVRSAAIDVIVIDSVAALVPRAEIEGEMGDAHVGLQARLMSQALRKITGNIGKTGCMVIFLNQLRSKIGVMYGNPETTTGGNALKFYASVRLDIRKAETLKKGQDEYGNRVRVKVVKNKVAPPFRKAEFDIIFGKGISSLGCILDLAVEMEIVERKGAWYSYGSERLGQGRENVLALLEENAAQAQEIEIKVREKIASGAAVPAAAVAAPDEGDDDLGDEEV.

Basic and acidic residues predominate over residues 1–10 (MARTTDDSKK). Positions 1-20 (MARTTDDSKKAAPAAGTADE) are disordered. 82–89 (GPESSGKT) provides a ligand contact to ATP. The interval 350-369 (PAAAVAAPDEGDDDLGDEEV) is disordered. A compositionally biased stretch (acidic residues) spans 358–369 (DEGDDDLGDEEV).

It belongs to the RecA family.

Its subcellular location is the cytoplasm. Its function is as follows. Can catalyze the hydrolysis of ATP in the presence of single-stranded DNA, the ATP-dependent uptake of single-stranded DNA by duplex DNA, and the ATP-dependent hybridization of homologous single-stranded DNAs. It interacts with LexA causing its activation and leading to its autocatalytic cleavage. The polypeptide is Protein RecA (Gloeobacter violaceus (strain ATCC 29082 / PCC 7421)).